Reading from the N-terminus, the 289-residue chain is 2-hydroxy-6-oxononadienedioate/2-hydroxy-6-oxononatrienedioate hydrolase 1 (289 aa).

Positions 39-275 constitute an AB hydrolase-1 domain; that stretch reads TVVMLHGSGP…RCGHWAQWEH (237 aa). Residue His269 is the Proton acceptor of the active site.

Belongs to the AB hydrolase superfamily. MhpC family. As to quaternary structure, homodimer.

It carries out the reaction (2Z,4E)-2-hydroxy-6-oxonona-2,4-dienedioate + H2O = (2Z)-2-hydroxypenta-2,4-dienoate + succinate + H(+). It catalyses the reaction (2Z,4E,7E)-2-hydroxy-6-oxonona-2,4,7-trienedioate + H2O = (2Z)-2-hydroxypenta-2,4-dienoate + fumarate + H(+). It participates in aromatic compound metabolism; 3-phenylpropanoate degradation. Its function is as follows. Catalyzes the cleavage of the C5-C6 bond of 2-hydroxy-6-oxononadienedioate and 2-hydroxy-6-oxononatrienedioate, a dienol ring fission product of the bacterial meta-cleavage pathway for degradation of phenylpropionic acid. The polypeptide is 2-hydroxy-6-oxononadienedioate/2-hydroxy-6-oxononatrienedioate hydrolase 1 (Dechloromonas aromatica (strain RCB)).